The following is a 176-amino-acid chain: NAD(P)H-quinone oxidoreductase subunit 6, chloroplastic (176 aa).

Helical transmembrane passes span 10-30 (FLLV…VLFP), 32-52 (PIYS…FYIL), 61-81 (AQLL…VMFL), 105-125 (ISLF…GIIW), and 153-173 (FLPF…AIVI).

The protein belongs to the complex I subunit 6 family. As to quaternary structure, NDH is composed of at least 16 different subunits, 5 of which are encoded in the nucleus.

The protein resides in the plastid. It is found in the chloroplast thylakoid membrane. The enzyme catalyses a plastoquinone + NADH + (n+1) H(+)(in) = a plastoquinol + NAD(+) + n H(+)(out). The catalysed reaction is a plastoquinone + NADPH + (n+1) H(+)(in) = a plastoquinol + NADP(+) + n H(+)(out). NDH shuttles electrons from NAD(P)H:plastoquinone, via FMN and iron-sulfur (Fe-S) centers, to quinones in the photosynthetic chain and possibly in a chloroplast respiratory chain. The immediate electron acceptor for the enzyme in this species is believed to be plastoquinone. Couples the redox reaction to proton translocation, and thus conserves the redox energy in a proton gradient. The protein is NAD(P)H-quinone oxidoreductase subunit 6, chloroplastic (ndhG) of Ipomoea purpurea (Common morning glory).